The sequence spans 160 residues: ATP synthase subunit b (160 aa).

The helical transmembrane segment at 15–35 (LVIVIGLLFWFLRGFLGGILE) threads the bilayer.

Belongs to the ATPase B chain family. As to quaternary structure, F-type ATPases have 2 components, F(1) - the catalytic core - and F(0) - the membrane proton channel. F(1) has five subunits: alpha(3), beta(3), gamma(1), delta(1), epsilon(1). F(0) has four main subunits: a(1), b(1), b'(1) and c(10-14). The alpha and beta chains form an alternating ring which encloses part of the gamma chain. F(1) is attached to F(0) by a central stalk formed by the gamma and epsilon chains, while a peripheral stalk is formed by the delta, b and b' chains.

The protein localises to the cellular thylakoid membrane. In terms of biological role, f(1)F(0) ATP synthase produces ATP from ADP in the presence of a proton or sodium gradient. F-type ATPases consist of two structural domains, F(1) containing the extramembraneous catalytic core and F(0) containing the membrane proton channel, linked together by a central stalk and a peripheral stalk. During catalysis, ATP synthesis in the catalytic domain of F(1) is coupled via a rotary mechanism of the central stalk subunits to proton translocation. Component of the F(0) channel, it forms part of the peripheral stalk, linking F(1) to F(0). This Synechococcus sp. (strain CC9605) protein is ATP synthase subunit b.